We begin with the raw amino-acid sequence, 48 residues long: Large ribosomal subunit protein bL33A (48 aa).

This sequence belongs to the bacterial ribosomal protein bL33 family.

The polypeptide is Large ribosomal subunit protein bL33A (Metamycoplasma arthritidis (strain 158L3-1) (Mycoplasma arthritidis)).